The chain runs to 487 residues: Meiotic recombination protein SPO11-4 (487 aa).

Residues 1 to 56 (MDDSTDDDSYHPRKHYAYDRQVSSSRWRTSREYIRGPGPETHTTESAQDGQDPPAG) are disordered. The Topo IIA-type catalytic domain maps to 119-252 (KSRVEARKTL…LGIIAAEKGI (134 aa)). Tyr213 functions as the O-(5'-phospho-DNA)-tyrosine intermediate in the catalytic mechanism. Mg(2+) contacts are provided by Glu301 and Asp353.

Belongs to the TOP6A family. In terms of assembly, homodimer. Interacts with TOP6B. Mg(2+) serves as cofactor.

The protein localises to the nucleus. It carries out the reaction ATP-dependent breakage, passage and rejoining of double-stranded DNA.. Its function is as follows. Required for meiotic recombination. Mediates DNA cleavage that forms the double-strand breaks (DSB) that initiate meiotic recombination. Possesses double-stranded DNA cleavage activity in vitro. The polypeptide is Meiotic recombination protein SPO11-4 (SPO11-4) (Oryza sativa subsp. japonica (Rice)).